The primary structure comprises 634 residues: CREB-regulated transcription coactivator 1 (634 aa).

A phosphoserine mark is found at Ser64 and Ser113. 4 disordered regions span residues 110–174 (RLGS…GSQD), 191–221 (TTSEADKNLSKQAWDTKKTGSRPKSCEVPGI), 258–331 (LPTP…TLSP), and 357–479 (QAGS…HTST). Thr149 carries the post-translational modification Phosphothreonine. Ser151 bears the Phosphoserine; by SIK1 and SIK2 mark. The segment covering 151–174 (SDSALHQSTMTPTQPESFSSGSQD) has biased composition (polar residues). Position 161 is a phosphothreonine (Thr161). Over residues 194-208 (EADKNLSKQAWDTKK) the composition is skewed to basic and acidic residues. Residues 242-258 (TGGSLPDLTNIHFPSPL) carry the Nuclear export signal motif. Polar residues-rich tracts occupy residues 271 to 283 (ALSSSSSTGNLAA), 296 to 305 (GMSTPGSSPQ), and 314 to 331 (LSLSTEARRQQASPTLSP). The segment covering 362-397 (QPPPQPQPPPPPPPASQQPPPPPPPQAPVRLPPGGP) has biased composition (pro residues). A compositionally biased stretch (polar residues) spans 446-479 (QYRTSAGSPANQSPTSPVSNQGFSPGSSPQHTST).

Belongs to the TORC family. As to quaternary structure, binds, as a tetramer, through its N-terminal region, with the bZIP domain of CREB1. 'Arg-314' in the bZIP domain of CREB1 is essential for this interaction. Interaction, via its C-terminal, with TAF4, enhances recruitment of TAF4 to CREB1. Interacts with 14-3-3 proteins, including YWHAE/14-3-3 epsilon. Interacts with calmodulin-dependent catalytic subunit PPP3CA/calcineurin A. (Microbial infection) Interacts with HTLV1 Tax. Phosphorylation/dephosphorylation states of Ser-151 are required for regulating transduction of CREB activity. TORCs are inactive when phosphorylated, and active when dephosphorylated at this site. This primary site of phosphorylation is mediated by SIKs (SIK1 and SIK2), is regulated by cAMP and calcium levels and is dependent on the phosphorylation of SIKs by LKB1. As to expression, highly expressed in adult and fetal brain. Located to specific regions such as the prefrontal cortex and cerebellum. Very low expression in other tissues such as heart, spleen, lung, skeletal muscle, salivary gland, ovary and kidney.

The protein resides in the cytoplasm. It is found in the nucleus. Transcriptional coactivator for CREB1 which activates transcription through both consensus and variant cAMP response element (CRE) sites. Acts as a coactivator, in the SIK/TORC signaling pathway, being active when dephosphorylated and acts independently of CREB1 'Ser-133' phosphorylation. Enhances the interaction of CREB1 with TAF4. Regulates the expression of specific CREB-activated genes such as the steroidogenic gene, StAR. Potent coactivator of PGC1alpha and inducer of mitochondrial biogenesis in muscle cells. In the hippocampus, involved in late-phase long-term potentiation (L-LTP) maintenance at the Schaffer collateral-CA1 synapses. May be required for dendritic growth of developing cortical neurons. In concert with SIK1, regulates the light-induced entrainment of the circadian clock. In response to light stimulus, coactivates the CREB-mediated transcription of PER1 which plays an important role in the photic entrainment of the circadian clock. Its function is as follows. (Microbial infection) Plays a role of coactivator for TAX activation of the human T-cell leukemia virus type 1 (HTLV-1) long terminal repeats (LTR). The protein is CREB-regulated transcription coactivator 1 of Homo sapiens (Human).